Here is a 57-residue protein sequence, read N- to C-terminus: Small ribosomal subunit protein bS21 (57 aa).

The segment at 35-57 (REHYEKPSVKRKKKAEAARKKKF) is disordered. The span at 43–57 (VKRKKKAEAARKKKF) shows a compositional bias: basic residues.

This sequence belongs to the bacterial ribosomal protein bS21 family.

In Alkaliphilus metalliredigens (strain QYMF), this protein is Small ribosomal subunit protein bS21.